The chain runs to 122 residues: Large ribosomal subunit protein bL12 (122 aa).

Belongs to the bacterial ribosomal protein bL12 family. In terms of assembly, homodimer. Part of the ribosomal stalk of the 50S ribosomal subunit. Forms a multimeric L10(L12)X complex, where L10 forms an elongated spine to which 2 to 4 L12 dimers bind in a sequential fashion. Binds GTP-bound translation factors.

In terms of biological role, forms part of the ribosomal stalk which helps the ribosome interact with GTP-bound translation factors. Is thus essential for accurate translation. This is Large ribosomal subunit protein bL12 from Stenotrophomonas maltophilia (strain K279a).